The primary structure comprises 122 residues: Ribosomal protein eL22-like (122 aa).

Phosphoserine occurs at positions 112, 118, and 120.

Belongs to the eukaryotic ribosomal protein eL22 family.

The protein is Ribosomal protein eL22-like (RPL22L1) of Homo sapiens (Human).